The chain runs to 133 residues: Ribonuclease P protein component (133 aa).

The protein belongs to the RnpA family. In terms of assembly, consists of a catalytic RNA component (M1 or rnpB) and a protein subunit.

The catalysed reaction is Endonucleolytic cleavage of RNA, removing 5'-extranucleotides from tRNA precursor.. RNaseP catalyzes the removal of the 5'-leader sequence from pre-tRNA to produce the mature 5'-terminus. It can also cleave other RNA substrates such as 4.5S RNA. The protein component plays an auxiliary but essential role in vivo by binding to the 5'-leader sequence and broadening the substrate specificity of the ribozyme. The chain is Ribonuclease P protein component from Pseudomonas putida (strain ATCC 47054 / DSM 6125 / CFBP 8728 / NCIMB 11950 / KT2440).